Here is a 356-residue protein sequence, read N- to C-terminus: Proline-rich protein 19 (356 aa).

A compositionally biased stretch (polar residues) spans 1-12; it reads MDTQGPVSQPFQ. 4 disordered regions span residues 1 to 53, 95 to 143, 216 to 255, and 312 to 331; these read MDTQ…RDPP, LVPG…ELSG, INSPDQVPEQERQRKQQGTKEFTFPMPYTSSMPTAHRGSL, and PSSPLLPRTSVLDWSPSPPS. Residues 19–29 are compositionally biased toward basic residues; that stretch reads RVRRRKTRRER.

In terms of assembly, interacts with CNTD1.

The protein localises to the nucleus. It is found in the chromosome. Functionally, promotes meiotic crossing over formation through its interaction with CNTD1 by participating in the crossover differentiation step of crossover-specific recombination intermediates. The chain is Proline-rich protein 19 from Homo sapiens (Human).